We begin with the raw amino-acid sequence, 224 residues long: MQVLLVEDDQTLFQELKKELEHWDFFVTGIDDFSAVMDIYEETNPEIVIMDVQLPKYDGFYWCRKIRQVSNVPILFLSSRDNPMDQVMSMELGADDYMQKPFHTNVLIAKLQAIYRRVYEFGAEEKRTLNWQDALVDLSKDSIQKGDSVIYLSKTEMIILEMLIQKQNQIVTRDTLITALWDDEAFVSDNTLTVNVNRLRKKLSDIGMDTQIETKVGKGYMAHE.

The Response regulatory domain maps to 2-115 (QVLLVEDDQT…VLIAKLQAIY (114 aa)). A 4-aspartylphosphate modification is found at Asp51. Positions 126–224 (KRTLNWQDAL…KVGKGYMAHE (99 aa)) form a DNA-binding region, ompR/PhoB-type.

Post-translationally, phosphorylated by GraS.

Its subcellular location is the cytoplasm. In terms of biological role, member of the two-component regulatory system GraR/GraS involved in resistance against cationic antimicrobial peptides (CAMPs). This is Response regulator protein GraR (graR) from Staphylococcus haemolyticus (strain JCSC1435).